A 508-amino-acid polypeptide reads, in one-letter code: PTS system mannitol-specific EIICB component (508 aa).

Over 1–30 (MSQTETQENKGLGRKVQAFGSFLSSMIMPN) the chain is Cytoplasmic. The region spanning 19 to 351 (FGSFLSSMIM…LKFTKEPEED (333 aa)) is the PTS EIIC type-2 domain. The helical transmembrane segment at 31–52 (IGAFIAWGFIAAIFIDGGWWPN) threads the bilayer. The Extracellular segment spans residues 53 to 56 (KDLS). Residues 57–77 (ELAGPMISYLIPLLIAYSGGR) traverse the membrane as a helical segment. Over 78-141 (LIHEMRGGII…QGFEMLFNNF (64 aa)) the chain is Cytoplasmic. Residues 142-163 (SAGILGFIMTIVGFKILAPIME) form a helical membrane-spanning segment. At 164 to 172 (FIMHILSLA) the chain is on the extracellular side. Residues 173–193 (VEALVHAHLLPLVSIIVEPAK) traverse the membrane as a helical segment. Over 194-280 (IVFLNNAINH…VLMRPLLFIA (87 aa)) the chain is Cytoplasmic. The chain crosses the membrane as a helical span at residues 281–300 (VILGGMTGVATYSLLDFGFK). Over 301-320 (SPASPGSFIVYMLNAPKGEF) the chain is Extracellular. A helical membrane pass occupies residues 321–342 (LHMVLGVLLAAIVSFIVAALIL). Over 343 to 508 (KFTKEPEEDL…RYDELLENLK (166 aa)) the chain is Cytoplasmic. A disordered region spans residues 355 to 400 (ATEKMEASKGKKSSVSSKLKGNEDNNATSTTASTSTSENNEEQSEE). Positions 367-392 (SSVSSKLKGNEDNNATSTTASTSTSE) are enriched in low complexity. The 89-residue stretch at 420-508 (NHVIFACDAG…RYDELLENLK (89 aa)) folds into the PTS EIIB type-2 domain. Cys-426 functions as the Phosphocysteine intermediate; for EIIB activity in the catalytic mechanism. The residue at position 426 (Cys-426) is a Phosphocysteine; by EIIA.

In terms of assembly, homodimer.

The protein localises to the cell membrane. It carries out the reaction D-mannitol(out) + N(pros)-phospho-L-histidyl-[protein] = D-mannitol 1-phosphate(in) + L-histidyl-[protein]. The phosphoenolpyruvate-dependent sugar phosphotransferase system (sugar PTS), a major carbohydrate active transport system, catalyzes the phosphorylation of incoming sugar substrates concomitantly with their translocation across the cell membrane. The enzyme II CmtAB PTS system is involved in D-mannitol transport. This is PTS system mannitol-specific EIICB component (mtlA) from Staphylococcus saprophyticus subsp. saprophyticus (strain ATCC 15305 / DSM 20229 / NCIMB 8711 / NCTC 7292 / S-41).